A 461-amino-acid chain; its full sequence is Chromosomal replication initiator protein DnaA (461 aa).

Positions 1 to 84 (MAVSLWQQCI…RFDIGSRPSA (84 aa)) are domain I, interacts with DnaA modulators. A domain II region spans residues 84–124 (AKKFEPAPVATVRAPNTQTKATVGTYFNTQAEPIANANHRS). The domain III, AAA+ region stretch occupies residues 125–341 (NINPTYQFDN…GALNRVIANA (217 aa)). Residues Gly169, Gly171, Lys172, and Thr173 each contribute to the ATP site. The segment at 342 to 461 (NFTGRPITID…YANLIRTLSS (120 aa)) is domain IV, binds dsDNA.

This sequence belongs to the DnaA family. In terms of assembly, oligomerizes as a right-handed, spiral filament on DNA at oriC.

The protein resides in the cytoplasm. In terms of biological role, plays an essential role in the initiation and regulation of chromosomal replication. ATP-DnaA binds to the origin of replication (oriC) to initiate formation of the DNA replication initiation complex once per cell cycle. Binds the DnaA box (a 9 base pair repeat at the origin) and separates the double-stranded (ds)DNA. Forms a right-handed helical filament on oriC DNA; dsDNA binds to the exterior of the filament while single-stranded (ss)DNA is stabiized in the filament's interior. The ATP-DnaA-oriC complex binds and stabilizes one strand of the AT-rich DNA unwinding element (DUE), permitting loading of DNA polymerase. After initiation quickly degrades to an ADP-DnaA complex that is not apt for DNA replication. Binds acidic phospholipids. The protein is Chromosomal replication initiator protein DnaA of Shewanella putrefaciens (strain CN-32 / ATCC BAA-453).